A 251-amino-acid chain; its full sequence is Astacin (251 aa).

A signal peptide spans 1-15 (MQCAVLLVLLGVVAA). A propeptide spans 16 to 49 (SPIIPEAARALYYNDGMFEGDIKLRAGRQPARVG) (activation peptide). Residues 50–248 (AAILGDEYLW…INNLYTNECS (199 aa)) enclose the Peptidase M12A domain. Intrachain disulfides connect Cys-91-Cys-247 and Cys-113-Cys-133. His-141 provides a ligand contact to Zn(2+). Residue Glu-142 is part of the active site. Residues His-145 and His-151 each coordinate Zn(2+). Residues 250 to 251 (RH) constitute a propeptide that is removed on maturation.

As to quaternary structure, monomer. It depends on Zn(2+) as a cofactor.

It carries out the reaction Hydrolysis of peptide bonds in substrates containing five or more amino acids, preferentially with Ala in P1', and Pro in P2'.. Its function is as follows. Metalloprotease. This protease prefers to cleave in front of small aliphatic residues (P1'). The presence of Lys or Arg in the P1 and P2 position yields high-turnover substrates. In the P3 position the enzyme prefers Pro &gt; Val &gt; Leu &gt; Ala &gt; Gly. This Astacus astacus (Noble crayfish) protein is Astacin.